Here is a 43-residue protein sequence, read N- to C-terminus: Snake venom metalloproteinase crotalin (43 aa).

Residues 1–43 (LLRRKSHDHAQNHDGDKCLRGASLGYYQSFLNQYKPQCILNKP) form the Peptidase M12B domain. H13 lines the Zn(2+) pocket.

The protein belongs to the venom metalloproteinase (M12B) family. P-I subfamily. As to quaternary structure, monomer. It depends on Zn(2+) as a cofactor. In terms of processing, this protein autoproteolytically degrades to 10 kDa and 14 kDa fragments in the presence of SDS. Interestingly, the two fragments, as well as reduced crotalin are able to bind vWF, indicating that the binding activity does not require a specific protein conformation. In terms of tissue distribution, expressed by the venom gland.

Its subcellular location is the secreted. Functionally, snake venom zinc metalloproteinase that inhibits ristocin-induced platelet aggregation by abolishing the binding of von Willebrand factor (vWF) to platelet glycoprotein Ib alpha (GPIBA) through the cleavage of both GP1BA and vWF. Also has fibrinogenolytic activities by degrading the alpha- (FGA) and beta-chain (FGB) of fibrinogen. In vivo, induces a slight hemorrhage when applied to chick chorioallantoic membrane and has potent antithrombic effect. The sequence is that of Snake venom metalloproteinase crotalin from Crotalus atrox (Western diamondback rattlesnake).